A 172-amino-acid chain; its full sequence is MSLPNPAELIRQMAVDLRAHLARRHISEPRYIGIRTGGVWVAQALQEAMGDTSPMGTLDVSFYRDDFSQNGLHPQVRPSELPFEVEGQHLVLVDDVLMSGRTIRAALNELFDYGRPASVTLVCLLDLDAGELPIRPNVLGATLSLAAHERVKLTGPAPLALERQDLASASAL.

The PRPP-binding signature appears at 90–102 (LVLVDDVLMSGRT).

It belongs to the purine/pyrimidine phosphoribosyltransferase family. PyrR subfamily.

The enzyme catalyses UMP + diphosphate = 5-phospho-alpha-D-ribose 1-diphosphate + uracil. Its function is as follows. Regulates the transcription of the pyrimidine nucleotide (pyr) operon in response to exogenous pyrimidines. In terms of biological role, also displays a weak uracil phosphoribosyltransferase activity which is not physiologically significant. The polypeptide is Bifunctional protein PyrR (Pseudomonas putida (strain GB-1)).